The chain runs to 360 residues: Methionine import ATP-binding protein MetN (360 aa).

The interval 1–22 is disordered; that stretch reads MSHTASTPTPEEYSAQQPSTQG. Residues 25-265 enclose the ABC transporter domain; the sequence is VEFRGITKVF…PQTQVAQKFV (241 aa). 62–69 serves as a coordination point for ATP; the sequence is GYSGAGKS.

This sequence belongs to the ABC transporter superfamily. Methionine importer (TC 3.A.1.24) family. In terms of assembly, the complex is composed of two ATP-binding proteins (MetN), two transmembrane proteins (MetI) and a solute-binding protein (MetQ).

Its subcellular location is the cell membrane. The catalysed reaction is L-methionine(out) + ATP + H2O = L-methionine(in) + ADP + phosphate + H(+). The enzyme catalyses D-methionine(out) + ATP + H2O = D-methionine(in) + ADP + phosphate + H(+). Part of the ABC transporter complex MetNIQ involved in methionine import. Responsible for energy coupling to the transport system. The protein is Methionine import ATP-binding protein MetN of Corynebacterium glutamicum (strain ATCC 13032 / DSM 20300 / JCM 1318 / BCRC 11384 / CCUG 27702 / LMG 3730 / NBRC 12168 / NCIMB 10025 / NRRL B-2784 / 534).